We begin with the raw amino-acid sequence, 123 residues long: MDVFKKGFSIAREGVVGAVEKTKQGVTEAAEKTKEGVMYVGTKTKGERGTSVTSVAEKTKEQANAVSEAVVSSVNTVATKTVEEAENIVVTTGVVRKEDLEPPAQDQEAKEQEEGEEAKSGGD.

2 consecutive repeat copies span residues 20–30 and 31–41. The tract at residues 20 to 67 is 4 X 11 AA tandem repeats of [EGSA]-K-T-K-[EQ]-[GQ]-V-X(4); sequence EKTKQGVTEAAEKTKEGVMYVGTKTKGERGTSVTSVAEKTKEQANAVS. A 3; approximate repeat occupies 42–56; that stretch reads TKTKGERGTSVTSVA. Repeat unit 4 spans residues 57 to 67; sequence EKTKEQANAVS. Phosphoserine occurs at positions 67 and 72. The interval 93–123 is disordered; it reads GVVRKEDLEPPAQDQEAKEQEEGEEAKSGGD. Over residues 107 to 123 the composition is skewed to basic and acidic residues; sequence QEAKEQEEGEEAKSGGD. Ser120 carries the post-translational modification Phosphoserine; by BARK1, CaMK2 and CK2.

It belongs to the synuclein family. In terms of assembly, may be a centrosome-associated protein. Interacts with MYOC; affects its secretion and its aggregation. Post-translationally, phosphorylated. Phosphorylation by GRK5 appears to occur on residues distinct from the residue phosphorylated by other kinases. Specifically expressed in the peripheral nervous system. High expression in motoneurons of the brainstem. Also found in neurons of many other brain regions including the cerebellar cortex, thalamus, hypothalamus and CA1, CA2, CA3 and CA4 regions of the hippocampus.

It localises to the cytoplasm. It is found in the perinuclear region. The protein resides in the cytoskeleton. The protein localises to the microtubule organizing center. Its subcellular location is the centrosome. It localises to the spindle. In terms of biological role, plays a role in neurofilament network integrity. May be involved in modulating axonal architecture during development and in the adult. In vitro, increases the susceptibility of neurofilament-H to calcium-dependent proteases. May also function in modulating the keratin network in skin. Activates the MAPK and Elk-1 signal transduction pathway. This is Gamma-synuclein (Sncg) from Rattus norvegicus (Rat).